Reading from the N-terminus, the 235-residue chain is Purine nucleoside phosphorylase DeoD-type (235 aa).

His4 lines the a purine D-ribonucleoside pocket. Phosphate is bound by residues Gly20, Arg24, Arg43, and Arg87–Thr90. A purine D-ribonucleoside-binding positions include Glu162, Glu179–Glu181, and Ser203–Asp204. Residue Asp204 is the Proton donor of the active site.

This sequence belongs to the PNP/UDP phosphorylase family. As to quaternary structure, homohexamer; trimer of homodimers.

The enzyme catalyses a purine D-ribonucleoside + phosphate = a purine nucleobase + alpha-D-ribose 1-phosphate. It carries out the reaction a purine 2'-deoxy-D-ribonucleoside + phosphate = a purine nucleobase + 2-deoxy-alpha-D-ribose 1-phosphate. Functionally, catalyzes the reversible phosphorolytic breakdown of the N-glycosidic bond in the beta-(deoxy)ribonucleoside molecules, with the formation of the corresponding free purine bases and pentose-1-phosphate. This chain is Purine nucleoside phosphorylase DeoD-type, found in Bacillus cytotoxicus (strain DSM 22905 / CIP 110041 / 391-98 / NVH 391-98).